A 380-amino-acid chain; its full sequence is Spore coat protein B (380 aa).

Residues 224-364 (GPKGSYKKED…SSGKQKEDYS (141 aa)) form a disordered region. Residues 229–248 (YKKEDQKNEQNQEDNNDKDS) are compositionally biased toward basic and acidic residues. 3 stretches are compositionally biased toward low complexity: residues 275 to 288 (SKSGRSSRSKSSSK), 296 to 315 (SSDYQSSKSGRSSRSKSSSK), and 338 to 356 (SSDYQSSRSPGYSSSIKSS).

The polypeptide is Spore coat protein B (cotB) (Bacillus subtilis (strain 168)).